A 297-amino-acid polypeptide reads, in one-letter code: 33 kDa chaperonin (297 aa).

Cystine bridges form between Cys-239/Cys-241 and Cys-272/Cys-275.

Belongs to the HSP33 family. In terms of processing, under oxidizing conditions two disulfide bonds are formed involving the reactive cysteines. Under reducing conditions zinc is bound to the reactive cysteines and the protein is inactive.

Its subcellular location is the cytoplasm. Functionally, redox regulated molecular chaperone. Protects both thermally unfolding and oxidatively damaged proteins from irreversible aggregation. Plays an important role in the bacterial defense system toward oxidative stress. The chain is 33 kDa chaperonin from Synechococcus elongatus (strain ATCC 33912 / PCC 7942 / FACHB-805) (Anacystis nidulans R2).